We begin with the raw amino-acid sequence, 355 residues long: MLDRLQAVEDRYEKLNELLSDPAVINDSNKLREYSKEQSDIQETVEVYREYKDVREQLQDAKAMLEDKLDAEMREMVKEEVSDLEVQEKELSDRLKILLVPKDPNDDKNVIVEIRGAAGGDEAALFAGDLYRMYSRYAEMQGWKTDIIEASYTELGGYKEIIFMINGKGAYAKLKFENGAHRVQRVPETESGGRIHTSTATVAVLPEAEEVEIDIHEKDIRVDTFASSGPGGQSVNTTMSAVRLTHLPTGVVVSCQDEKSQIKNKEKAMKVLRARIYDKFRQEAQAEYDQNRKQAVGTGDRSERIRTYNFPQNRVTDHRIGLTIQKLDQILQGKLDDFINALVMEDQAKKMEAAE.

An N5-methylglutamine modification is found at Q233.

The protein belongs to the prokaryotic/mitochondrial release factor family. Post-translationally, methylated by PrmC. Methylation increases the termination efficiency of RF1.

Its subcellular location is the cytoplasm. Its function is as follows. Peptide chain release factor 1 directs the termination of translation in response to the peptide chain termination codons UAG and UAA. In Bacillus cytotoxicus (strain DSM 22905 / CIP 110041 / 391-98 / NVH 391-98), this protein is Peptide chain release factor 1.